We begin with the raw amino-acid sequence, 336 residues long: PHD finger protein 11 (336 aa).

The disordered stretch occupies residues 1–20; the sequence is MAEETAPPCGPVSTGGSLSP. The C2HC pre-PHD-type zinc-finger motif lies at 25-61; the sequence is KRTCALCPDGHEWSVIYFAPSANIAAHENCLLYSSGL. The PHD-type zinc finger occupies 91–143; it reads LKCSLCNKGGATVGCDLSSCRKSYHYVCAKKDHAIPQVDEDLGTYKIFCPEHP. 2 disordered regions span residues 139–179 and 303–336; these read CPEH…KKMK and DPSG…GDSL. Residues 303–314 show a composition bias toward low complexity; it reads DPSGSTSGSLLP.

In terms of assembly, interacts with BRCA1 and RELA.

It is found in the nucleus. Positive regulator of Th1-type cytokine gene expression. The protein is PHD finger protein 11 (Phf11) of Rattus norvegicus (Rat).